The sequence spans 95 residues: Large ribosomal subunit protein bL25 (95 aa).

Belongs to the bacterial ribosomal protein bL25 family. In terms of assembly, part of the 50S ribosomal subunit; part of the 5S rRNA/L5/L18/L25 subcomplex. Contacts the 5S rRNA. Binds to the 5S rRNA independently of L5 and L18.

This is one of the proteins that binds to the 5S RNA in the ribosome where it forms part of the central protuberance. The protein is Large ribosomal subunit protein bL25 of Shewanella frigidimarina (strain NCIMB 400).